A 380-amino-acid chain; its full sequence is DNA replication and repair protein RecF (380 aa).

30–37 (GQNGQGKT) contacts ATP.

This sequence belongs to the RecF family.

Its subcellular location is the cytoplasm. The RecF protein is involved in DNA metabolism; it is required for DNA replication and normal SOS inducibility. RecF binds preferentially to single-stranded, linear DNA. It also seems to bind ATP. The polypeptide is DNA replication and repair protein RecF (Myxococcus xanthus (strain DK1622)).